A 401-amino-acid polypeptide reads, in one-letter code: Exodeoxyribonuclease 7 large subunit (401 aa).

The protein belongs to the XseA family. In terms of assembly, heterooligomer composed of large and small subunits.

The protein resides in the cytoplasm. The enzyme catalyses Exonucleolytic cleavage in either 5'- to 3'- or 3'- to 5'-direction to yield nucleoside 5'-phosphates.. Functionally, bidirectionally degrades single-stranded DNA into large acid-insoluble oligonucleotides, which are then degraded further into small acid-soluble oligonucleotides. The chain is Exodeoxyribonuclease 7 large subunit from Thermoanaerobacter pseudethanolicus (strain ATCC 33223 / 39E) (Clostridium thermohydrosulfuricum).